We begin with the raw amino-acid sequence, 412 residues long: Serine hydroxymethyltransferase (412 aa).

(6S)-5,6,7,8-tetrahydrofolate is bound by residues Leu-120 and 124–126 (GHL). Lys-228 bears the N6-(pyridoxal phosphate)lysine mark. Residue 353-355 (SPF) coordinates (6S)-5,6,7,8-tetrahydrofolate.

Belongs to the SHMT family. Homodimer. Requires pyridoxal 5'-phosphate as cofactor.

It localises to the cytoplasm. It catalyses the reaction (6R)-5,10-methylene-5,6,7,8-tetrahydrofolate + glycine + H2O = (6S)-5,6,7,8-tetrahydrofolate + L-serine. The protein operates within one-carbon metabolism; tetrahydrofolate interconversion. It functions in the pathway amino-acid biosynthesis; glycine biosynthesis; glycine from L-serine: step 1/1. Catalyzes the reversible interconversion of serine and glycine with tetrahydrofolate (THF) serving as the one-carbon carrier. This reaction serves as the major source of one-carbon groups required for the biosynthesis of purines, thymidylate, methionine, and other important biomolecules. Also exhibits THF-independent aldolase activity toward beta-hydroxyamino acids, producing glycine and aldehydes, via a retro-aldol mechanism. The sequence is that of Serine hydroxymethyltransferase from Lachnoclostridium phytofermentans (strain ATCC 700394 / DSM 18823 / ISDg) (Clostridium phytofermentans).